A 276-amino-acid chain; its full sequence is Octanoyltransferase LipM (276 aa).

The BPL/LPL catalytic domain maps to 31 to 246 (GKVPPTVRFY…GFASGLEVEL (216 aa)). Cys-148 acts as the Acyl-thioester intermediate in catalysis.

The protein belongs to the octanoyltransferase LipM family. In terms of assembly, monomer.

It catalyses the reaction octanoyl-[ACP] + L-lysyl-[protein] = N(6)-octanoyl-L-lysyl-[protein] + holo-[ACP] + H(+). It participates in protein modification; protein lipoylation via endogenous pathway; protein N(6)-(lipoyl)lysine from octanoyl-[acyl-carrier-protein]. Functionally, catalyzes the transfer of endogenously produced octanoic acid from octanoyl-acyl-carrier-protein onto the lipoyl domain of GcvH, an intermediate carrier during protein lipoylation. This Brevibacillus brevis (strain 47 / JCM 6285 / NBRC 100599) protein is Octanoyltransferase LipM.